A 1305-amino-acid polypeptide reads, in one-letter code: Adenylate cyclase type 9 (1305 aa).

At 1–110 the chain is on the cytoplasmic side; it reads MASPVNQQLL…CFPQTQRRFR (110 aa). Low complexity predominate over residues 46 to 55; the sequence is ISSSCSSGES. The disordered stretch occupies residues 46–71; that stretch reads ISSSCSSGESGVKKTGGSGGARRQKK. A helical transmembrane segment spans residues 111–131; the sequence is YALMYLSVAGLLWSIYFSVHM. Topologically, residues 132–134 are extracellular; sequence KTK. Residues 135 to 155 form a helical membrane-spanning segment; sequence LVSHLVPTLCFLIVCLGFFFF. The Cytoplasmic portion of the chain corresponds to 156–164; the sequence is TFTKSYARH. Residues 165–185 traverse the membrane as a helical segment; that stretch reads CTAISLLVTLLVFTLTLASQF. The Extracellular segment spans residues 186-209; sequence QVLNPGLGSDSLSNLTSFSATGSS. A glycan (N-linked (GlcNAc...) asparagine) is linked at N199. The chain crosses the membrane as a helical span at residues 210–229; sequence SCLSQVGSFSICVEVLLLLY. Residues 230–235 lie on the Cytoplasmic side of the membrane; that stretch reads TVMHLP. Residues 236–253 traverse the membrane as a helical segment; the sequence is LYLSACLGVAYSILFETF. Topologically, residues 254–274 are extracellular; it reads GYHFRDESCFVLLVGRMAHWE. The chain crosses the membrane as a helical span at residues 275–295; that stretch reads LLSKALLHVCIHAIGVHLFIM. Topologically, residues 296-778 are cytoplasmic; the sequence is SEVRSRSTFL…VKTFASATFS (483 aa). A disordered region spans residues 343–369; sequence QGDDESENSVKRHSASSPKSRKKKSSI. The segment covering 353-368 has biased composition (basic residues); that stretch reads KRHSASSPKSRKKKSS. The Mg(2+) site is built by D393, I394, and D437. Residues 393–398, 435–437, and R481 each bind ATP; these read DIVGFT and LGD. Polar residues-rich tracts occupy residues 607-618 and 670-680; these read SDSHTNCTQPET and ESSTGDTLTNS. The interval 607–680 is disordered; the sequence is SDSHTNCTQP…SSTGDTLTNS (74 aa). A helical transmembrane segment spans residues 779-799; the sequence is SLQDVLLNYFIFVLLSVACLL. Over 800–810 the chain is Extracellular; the sequence is KPGTNTVSPPT. The chain crosses the membrane as a helical span at residues 811-831; sequence LALVLLSVCGLLGFLSLLVSV. Topologically, residues 832–859 are cytoplasmic; that stretch reads RMAFYLEDMLLCTRRLLEIISGWVPRHF. A helical transmembrane segment spans residues 860 to 880; sequence IGTVLVCLPAAVIFSYLSSDF. Topologically, residues 881 to 883 are extracellular; the sequence is YTD. Residues 884 to 904 traverse the membrane as a helical segment; it reads IHYTMFLCSALLIPMVQYCNF. Residues 905–911 lie on the Cytoplasmic side of the membrane; the sequence is CQLSSSA. Residues 912–932 form a helical membrane-spanning segment; the sequence is LLLATITGATMLILIYLPLCP. The Extracellular portion of the chain corresponds to 933–966; that stretch reads QRPPLDPGTDIEANLSTSNSSYETLDNPRTELPF. N-linked (GlcNAc...) asparagine glycosylation is found at N946 and N951. A helical membrane pass occupies residues 967-987; it reads TRLGQEIAVAYFLLLLLVWFL. The Cytoplasmic segment spans residues 988 to 1305; it reads NREFDVSYRL…EERGRDGGAR (318 aa). Residues K1099, 1176–1178, 1183–1187, and K1223 contribute to the ATP site; these read DIW and NIASR. The tract at residues 1261-1305 is disordered; that stretch reads SIGRSPTDEISSLVTGGKGAVELGSGEAERKREKAEERGRDGGAR. A compositionally biased stretch (basic and acidic residues) spans 1287–1305; it reads EAERKREKAEERGRDGGAR.

It belongs to the adenylyl cyclase class-4/guanylyl cyclase family. Mg(2+) serves as cofactor. Requires Mn(2+) as cofactor. As to expression, detected in oocytes.

It is found in the cell membrane. The catalysed reaction is ATP = 3',5'-cyclic AMP + diphosphate. In terms of biological role, adenylyl cyclase that catalyzes the formation of the signaling molecule cAMP in response to activation of G protein-coupled receptors. In Xenopus laevis (African clawed frog), this protein is Adenylate cyclase type 9 (adcy9).